The sequence spans 284 residues: Tropomyosin (284 aa).

The stretch at 1–284 (MDSIKKKMMA…DTTFAELTSF (284 aa)) forms a coiled coil. The tract at residues 97 to 140 (EDFEQSSGRLTETSTKLDDASKAAEESERNRKTLETRSISDDER) is disordered. The span at 101 to 110 (QSSGRLTETS) shows a compositional bias: polar residues. Residues 111-140 (TKLDDASKAAEESERNRKTLETRSISDDER) are compositionally biased toward basic and acidic residues.

The protein belongs to the tropomyosin family. As to quaternary structure, homodimer.

Tropomyosin, in association with the troponin complex, plays a central role in the calcium dependent regulation of muscle contraction. The sequence is that of Tropomyosin from Echinococcus multilocularis (Fox tapeworm).